The chain runs to 612 residues: Cryptochrome-2 (612 aa).

Residues Met-1–Ile-485 are CNT2, binds chromophores to sense blue light and mediate CRY dimerization. A Photolyase/cryptochrome alpha/beta domain is found at Lys-5 to Leu-134. Tyr-232 provides a ligand contact to FAD. 2 residues coordinate Mg(2+): Asn-235 and Ser-243. Residue Thr-244–Ser-248 coordinates FAD. Mg(2+) is bound at residue His-355. FAD is bound by residues Asn-356 and Asp-387–Asp-389. Asn-356–Arg-357 is a binding site for ATP. Residue Asp-406 participates in ATP binding. The segment at Ser-486 to Lys-612 is CCT2/CCE2, mediates blue light signaling. Positions Gly-539–Val-576 are disordered. The Nuclear localization signal motif lies at Lys-541–Lys-555. Positions Arg-551–Leu-564 are enriched in basic and acidic residues. Residue Ser-587 is modified to Phosphoserine; by CK1. The segment at Lys-590–Lys-612 is disordered. The segment covering Gln-596 to Lys-612 has biased composition (polar residues). A phosphoserine mark is found at Ser-598 and Ser-599. Thr-603 carries the phosphothreonine; by CK1 modification. Position 605 is a phosphoserine (Ser-605).

The protein belongs to the DNA photolyase class-1 family. In terms of assembly, homodimer. Blue-light dependent dimerization. Interacts with COP1 and PHYB in the nucleus. Binds reversibly to CIBs proteins such as BHLH63/CIB1, BHLH78/CIB2, BHLH74/CIB4 and BHLH76/CIB5 after blue light illumination to stimulate their transcription factor activities. Interacts with PIF4 and PIF5 in the nucleus in response to low blue light (LBL). Binds to SPA1 in response to blue light, this interaction prevents SPA1/COP1 complex formation but stimulates interaction with COP1, and thus avoid COP1-dependent degradation of the transcription factors CO and HY5 by the proteasome and promotes hypocotyl elongation and floral initiation. Binding to ATP mediates conformational changes which facilitate flavin binding. Interacts with BIC1 in both darkness and light. Interacts with NRP. FAD serves as cofactor. The cofactor is (6R)-5,10-methylene-5,6,7,8-tetrahydrofolate. In terms of processing, phosphorylated by CK1.3 and CK1.4; in response to blue light. Required for degradation. Adopts an open conformation when phosphorylated upon photoexcitation and thus interacts with signaling partner proteins. Not autophosphorylated, even in complex with FAD cofactor. Post-translationally, ubiquitinated; in response to blue light. As to expression, mostly expressed in the shoot meristems and root tips, and, to a lower extent, in the cotyledons, hypocotyls, and roots.

The protein resides in the nucleus. The protein localises to the PML body. It is found in the cytoplasm. Photoreceptor that mediates primarily blue light inhibition of hypocotyl elongation and photoperiodic control of floral initiation, and regulates other light responses, including circadian rhythms, tropic growth, stomata opening, guard cell development, root development, bacterial and viral pathogen responses, abiotic stress responses, cell cycles, programmed cell death, apical dominance, fruit and ovule development, seed dormancy, and magnetoreception. Photoexcited cryptochromes interact with signaling partner proteins to alter gene expression at both transcriptional and post-translational levels and, consequently, regulate the corresponding metabolic and developmental programs. Blue-light absorbing flavoprotein that activates reversible flavin photoreduction via an electron transport chain comprising a tryptophan triad (W-321, W-374 and W-397), or via an alternative electron transport that involves small metabolites, including NADPH, NADH, and ATP. The half-life of the activated signaling state is about 16 minutes. Perceives low blue light (LBL) and responds by directly contacting two bHLH transcription factors, PIF4 and PIF5, at chromatin on E-box variant 5'-CA[CT]GTG-3' to promote their activity and stimulate specific gene expression to adapt global physiology (e.g. hypocotyl elongation and hyponastic growth in low blue light). In response to blue light, binds to CIB proteins (e.g. BHLH63/CIB1 and BHLH76/CIB5) to activate transcription and floral initiation. Mediates blue light-induced gene expression, floral initiation and hypocotyl elongation through the interaction with SPA1 that prevents formation of SPA1/COP1 complex but stimulates COP1 binding, and thus inhibits COP1-mediated degradation of transcription factors (e.g. CO and HY5). Promotes flowering time in continuous light (LL). Involved in shortening the circadian clock period, especially at 27 degrees Celsius, in blue light (BL). Required to maintain clock genes expression rhythm. Triggers nuclear accumulation of ROS in response to blue light illumination. Involved in blue light-dependent stomatal opening, transpiration and inhibition of stem and root growth, probably by regulating abscisic acid (ABA). Regulates the timing of flowering by promoting the expression of 'FLOWERING LOCUS T' (FT) in vascular bundles. Negatively regulated by 'FLOWERING LOCUS C' (FLC). General positive regulator of reversible low light-induced chromatin decompaction. Involved in triggering chromatin decondensation during floral transition. Together with phototropins, involved in phototropism regulation by various blue light fluence; blue light attenuates phototropism in high fluence rates (100 umol.m-2.s-1) but enhances phototropism in low fluence rates (&lt;1.0 umol.m-2.s-1). The effect of near-null magnetic field on flowering is altered by changes of blue light cycle and intensity in a CRY1/CRY2-dependent manner. Involved in the strigolactone signaling that regulates hypocotyl growth in response to blue light. Its function is as follows. Confers resistance to turnip crinkle virus (TCV) by preventing COP1-mediated proteasome-mediated degradation of RPP8/HRT, thus promoting its stability in light. Exposure to darkness or blue-light induces degradation of CRY2, and in turn of RPP8/HRT, resulting in susceptibility to TCV. The protein is Cryptochrome-2 of Arabidopsis thaliana (Mouse-ear cress).